The following is a 295-amino-acid chain: Ethanolamine ammonia-lyase small subunit (295 aa).

Residues valine 207, glutamate 228, and cysteine 258 each contribute to the adenosylcob(III)alamin site.

This sequence belongs to the EutC family. In terms of assembly, the basic unit is a heterodimer which dimerizes to form tetramers. The heterotetramers trimerize; 6 large subunits form a core ring with 6 small subunits projecting outwards. Requires adenosylcob(III)alamin as cofactor.

Its subcellular location is the bacterial microcompartment. It catalyses the reaction ethanolamine = acetaldehyde + NH4(+). It participates in amine and polyamine degradation; ethanolamine degradation. Functionally, catalyzes the deamination of various vicinal amino-alcohols to oxo compounds. Allows this organism to utilize ethanolamine as the sole source of nitrogen and carbon in the presence of external vitamin B12. This is Ethanolamine ammonia-lyase small subunit from Escherichia coli O139:H28 (strain E24377A / ETEC).